The following is a 934-amino-acid chain: Serine/threonine-protein kinase PknD (934 aa).

The region spanning 4–296 (YELIRLIGKG…ELRQALQPYL (293 aa)) is the Protein kinase domain. ATP contacts are provided by residues 10 to 18 (IGKGGMGEV) and Lys-33. The active-site Proton acceptor is Asp-138.

The protein belongs to the protein kinase superfamily. Ser/Thr protein kinase family. Post-translationally, autophosphorylated on serine and threonine residues.

The catalysed reaction is L-seryl-[protein] + ATP = O-phospho-L-seryl-[protein] + ADP + H(+). It catalyses the reaction L-threonyl-[protein] + ATP = O-phospho-L-threonyl-[protein] + ADP + H(+). Functionally, together with the serine/threonine kinase Pkn1, may play a role in the specific interactions with host proteins during intracellular growth. This chain is Serine/threonine-protein kinase PknD, found in Chlamydia trachomatis serovar A (strain ATCC VR-571B / DSM 19440 / HAR-13).